We begin with the raw amino-acid sequence, 219 residues long: EP300-interacting inhibitor of differentiation 2 (219 aa).

A disordered region spans residues 1 to 71 (MSELPADQGV…PVPEAREGPM (71 aa)). Over residues 20 to 34 (GDVRQAEVGGRRREP) the composition is skewed to basic and acidic residues. At Arg75 the chain carries Omega-N-methylarginine. The interval 95–115 (AEPAEEEGPEGRPRSRPGNGP) is disordered.

As to quaternary structure, heterodimer with EID2B. Interacts with the C-terminus of EP300. Interacts with HDAC1 and HDAC2. Interacts with SMAD2, SMAD4 and with the MH2 domain of SMAD3.

Its subcellular location is the nucleus. Functionally, interacts with EP300 and acts as a repressor of MYOD-dependent transcription and muscle differentiation. Inhibits EP300 histone acetyltransferase activity. Acts as a repressor of TGFB/SMAD transcriptional responses. May act as a repressor of the TGFB/SMAD3-dependent signaling by selectively blocking formation of TGFB-induced SMAD3-SMAD4 complex. This Bos taurus (Bovine) protein is EP300-interacting inhibitor of differentiation 2.